The primary structure comprises 384 residues: Small ribosomal subunit protein mS31 (384 aa).

The N-terminal 54 residues, 1–54 (MLHRIPAFLRPRPFSGLPLSCGNRDVSVAVLPAAQSGAVRTENNIQRHFCTSRS), are a transit peptide targeting the mitochondrion. Residues 101 to 136 (TANVKTPKPRGRKPSASLEATVDRLQKAPEDPPKKR) form a disordered region. The segment covering 121-136 (TVDRLQKAPEDPPKKR) has biased composition (basic and acidic residues).

Belongs to the mitochondrion-specific ribosomal protein mS31 family. Component of the mitochondrial ribosome small subunit (28S) which comprises a 12S rRNA and about 30 distinct proteins.

It localises to the mitochondrion. The chain is Small ribosomal subunit protein mS31 (Mrps31) from Mus musculus (Mouse).